The primary structure comprises 171 residues: Adenine phosphoribosyltransferase (171 aa).

Belongs to the purine/pyrimidine phosphoribosyltransferase family. As to quaternary structure, homodimer.

The protein resides in the cytoplasm. It catalyses the reaction AMP + diphosphate = 5-phospho-alpha-D-ribose 1-diphosphate + adenine. It participates in purine metabolism; AMP biosynthesis via salvage pathway; AMP from adenine: step 1/1. Functionally, catalyzes a salvage reaction resulting in the formation of AMP, that is energically less costly than de novo synthesis. This is Adenine phosphoribosyltransferase from Rhodospirillum centenum (strain ATCC 51521 / SW).